Reading from the N-terminus, the 173-residue chain is Protein PLASTID REDOX INSENSITIVE 2, chloroplastic (173 aa).

The N-terminal 55 residues, Met1–Arg55, are a transit peptide targeting the chloroplast.

The protein resides in the plastid. It localises to the chloroplast stroma. Its subcellular location is the chloroplast nucleoid. Functionally, required for the activity of the plastid-encoded RNA polymerase (PEP) and full expression of genes transcribed by PEP. In Zea mays (Maize), this protein is Protein PLASTID REDOX INSENSITIVE 2, chloroplastic.